We begin with the raw amino-acid sequence, 394 residues long: Elongation factor Tu (394 aa).

Residues 10-204 (KPHVNVGTIG…AVDEWIPTPE (195 aa)) enclose the tr-type G domain. The G1 stretch occupies residues 19-26 (GHIDHGKT). 19 to 26 (GHIDHGKT) provides a ligand contact to GTP. T26 serves as a coordination point for Mg(2+). The interval 60 to 64 (GITIN) is G2. The G3 stretch occupies residues 81–84 (DCPG). Residues 81 to 85 (DCPGH) and 136 to 139 (NKCD) contribute to the GTP site. The interval 136–139 (NKCD) is G4. Positions 174–176 (SAL) are G5.

Belongs to the TRAFAC class translation factor GTPase superfamily. Classic translation factor GTPase family. EF-Tu/EF-1A subfamily. In terms of assembly, monomer.

Its subcellular location is the cytoplasm. It carries out the reaction GTP + H2O = GDP + phosphate + H(+). Functionally, GTP hydrolase that promotes the GTP-dependent binding of aminoacyl-tRNA to the A-site of ribosomes during protein biosynthesis. In Mycoplasma pneumoniae (strain ATCC 29342 / M129 / Subtype 1) (Mycoplasmoides pneumoniae), this protein is Elongation factor Tu.